The chain runs to 447 residues: N-succinylarginine dihydrolase (447 aa).

Residues 19 to 28 (AGLSFGNEAS), N110, and 137 to 138 (HR) contribute to the substrate site. Residue E174 is part of the active site. R212 contributes to the substrate binding site. H248 is an active-site residue. 2 residues coordinate substrate: D250 and N359. C365 functions as the Nucleophile in the catalytic mechanism.

It belongs to the succinylarginine dihydrolase family. As to quaternary structure, homodimer.

It catalyses the reaction N(2)-succinyl-L-arginine + 2 H2O + 2 H(+) = N(2)-succinyl-L-ornithine + 2 NH4(+) + CO2. It participates in amino-acid degradation; L-arginine degradation via AST pathway; L-glutamate and succinate from L-arginine: step 2/5. Catalyzes the hydrolysis of N(2)-succinylarginine into N(2)-succinylornithine, ammonia and CO(2). This Salmonella typhimurium (strain LT2 / SGSC1412 / ATCC 700720) protein is N-succinylarginine dihydrolase.